A 120-amino-acid polypeptide reads, in one-letter code: NAD(P)H-quinone oxidoreductase subunit 3 (120 aa).

3 consecutive transmembrane segments (helical) span residues 6–26 (GYEY…LALT), 64–84 (MFAL…PWAV), and 89–109 (LGLL…VALA).

This sequence belongs to the complex I subunit 3 family. In terms of assembly, NDH-1 can be composed of about 15 different subunits; different subcomplexes with different compositions have been identified which probably have different functions.

It localises to the cellular thylakoid membrane. The enzyme catalyses a plastoquinone + NADH + (n+1) H(+)(in) = a plastoquinol + NAD(+) + n H(+)(out). It catalyses the reaction a plastoquinone + NADPH + (n+1) H(+)(in) = a plastoquinol + NADP(+) + n H(+)(out). Functionally, NDH-1 shuttles electrons from an unknown electron donor, via FMN and iron-sulfur (Fe-S) centers, to quinones in the respiratory and/or the photosynthetic chain. The immediate electron acceptor for the enzyme in this species is believed to be plastoquinone. Couples the redox reaction to proton translocation, and thus conserves the redox energy in a proton gradient. Cyanobacterial NDH-1 also plays a role in inorganic carbon-concentration. This is NAD(P)H-quinone oxidoreductase subunit 3 from Prochlorococcus marinus (strain NATL1A).